A 681-amino-acid chain; its full sequence is Proton channel OTOP3 (681 aa).

Positions 1-25 (MLSKEEPACRQFHSREKTWGNEHNG) are enriched in basic and acidic residues. The tract at residues 1–26 (MLSKEEPACRQFHSREKTWGNEHNGK) is disordered. The Cytoplasmic portion of the chain corresponds to 1 to 112 (MLSKEEPACR…LHQRAKKTGR (112 aa)). The helical transmembrane segment at 113–133 (LFSGLFGLNLMFLGGTVVSSV) threads the bilayer. Residues 134–143 (ALSNKAVPER) lie on the Extracellular side of the membrane. Residues 144–166 (DSQSFLCILMLLSSVWALYHLLF) traverse the membrane as a helical segment. At 167–182 (IRNQNGAVHHDHHAGA) the chain is on the cytoplasmic side. A helical membrane pass occupies residues 183 to 204 (MWLKASLAIFGVCSIILSIFEI). The Extracellular portion of the chain corresponds to 205–216 (GHALLLQNCEIL). The helical transmembrane segment at 217-240 (MDIVFFSIEIVFVSVQTVLLWVSC) threads the bilayer. The Cytoplasmic portion of the chain corresponds to 241 to 248 (KDCVQMHH). A helical transmembrane segment spans residues 249–271 (SVTRYGIMLTLATDILLWLTAVI). At 272 to 317 (DDSLEQDLEILQSNSTQDESNEMAQCQCPTDSMCWGLKQGYVTMFP) the chain is on the extracellular side. The helical transmembrane segment at 318-334 (FNIEYSLICATLLFIMW) threads the bilayer. The Cytoplasmic segment spans residues 335–358 (KNVGRREKLHSDPPRHTFQLRGII). The chain crosses the membrane as a helical span at residues 359-378 (YGPLIGGAALLVGISVFVQY). Residues 379–392 (QVEATSGMVSILSY) are Extracellular-facing. Residues 393 to 415 (HMYYGYKMIILAPMIVCSVAGII) traverse the membrane as a helical segment. Residues 416–507 (AHSLREKEKK…QGKMKNYTRK (92 aa)) are Cytoplasmic-facing. The helical transmembrane segment at 508–529 (LDVTLLFVSAVGQLGISYFSII) threads the bilayer. Over 530 to 540 (ATVVTTPWTML) the chain is Extracellular. A helical membrane pass occupies residues 541–563 (SALNFSNSLLLILQYLSQTMFII). Topologically, residues 564-614 (ESMRSIHEEEKEKPGHHEESHRRMSVQEMHKAPPSCLDAGHLGLSRRVVKE) are cytoplasmic. Residues 615-632 (MAMFLMICNIMCWILGAF) traverse the membrane as a helical segment. Residues 633 to 651 (GAHPLYMNGLERQLYGSGI) lie on the Extracellular side of the membrane. Residues 652–674 (WLAILNIGLPLSVFYRMHSVGIL) form a helical membrane-spanning segment. At 675-681 (LEVYLHA) the chain is on the cytoplasmic side.

Belongs to the otopetrin family. As to quaternary structure, homodimer.

The protein localises to the cell membrane. The enzyme catalyses H(+)(in) = H(+)(out). PH regulates the proton channel activity from both sides of the plasma membrane. Low pH activates the channel from the extracellular side but inactivates the channel on the intracellular side. Zn(2+) and Ca(2+) can partially block the channel. Functionally, proton-selective channel gated by extracellular protons. In Xenopus tropicalis (Western clawed frog), this protein is Proton channel OTOP3 (otop3).